Reading from the N-terminus, the 1028-residue chain is MGILSVIRIFIYCLIRLFSFNSRKRNSSIDELERGEINAFACDKQNTPSPNSECRPLTPLNSPFRRTVEGDTANLQAPSPTACPSFDSASSIKSSKEDIACRKLSTERFFYSPNGIDEMKKQQQFKKIPTVSITEVEPAFIPSNMEQALFSEEPFVIQDDLSHQINLDDNRKFSRIQKNKLDPLITVNLVPIVNGENCFNFYETQMETNFLSPEFIKKPSMVDHKRDSEINAVTAVSADGSFSPLTETLSSTISTLSNDSLDGLSSQKNEFTGFNSNSEWIPNDTVDYICNSDASSVVSNLSDFEDCFDQFGVYDKEYEKKIEKTKRNFPKFQSSATYPPFSAHHQARRNNPQGFRNVKKRFQLFKDDCTALTDSDFLDALPFFNARVIIALYVEWRLRVYETMIIKGEESLKNLQRARDGPHNKLWLGVFGNKDTIKKLSNYDRRAISNPYVSNHLNFNVRRVKSDTVYIPTILQLLRSSTQLMTEQAFVASSNLKSTKGLRETRLIQKYKVKGDFEYVYAALYYAAFTQESTLKAVTIDDILSEDELEDWWYLNLRYTSFITPQLCFEFLDKEADSCRDRLTEVKSEPPKAVIYEEPLNKLSRFSSDRLFTSHELVAIAELISLNEPPLESGKKFYYEEFQKACQKKRDDYRYSPEIEFKAAFREKFLQSNEKVPFPRPGEIYEKRCDYFSKYACQNIFISKPLKRSGSIYEVFSDGIGRVIYGSVLDYEATRNNILLHFGFEIHCAPSEEELIEREEAFKDFHNMLSFKYSANEIYEFCGTHSRAEVHKNEVLKRMAYYLIDENKEISILRRILSLRIVEPTTSFTRYEYDLWRTFYPDVLYLNYSKSGRIPTGSPYIMNGQWRKDLCVSTPPMVDINSALFPHWFKLSASNLFAGAEHAGLNRQKPDKIDLDLYEPLPENSYLVAAELRVLRALRHKNPENIPLLEKWEVRALHQLMAKIRKYYTVPTDYLSLRMDGLQAMLRKREYMSCYTFNYFDYACLMDHAYRLYEGFNNQVVNLPPRIM.

The protein resides in the prospore membrane. Functionally, has a role in spore morphogenesis. Involved in the assembly of the forespore membrane. In Schizosaccharomyces pombe (strain 972 / ATCC 24843) (Fission yeast), this protein is Sporulation-specific protein 3 (spo3).